The following is an 845-amino-acid chain: Taste receptor type 1 member 3 (845 aa).

A signal peptide spans 1–18; sequence MAGLMLLSLMALLGLGAG. The Extracellular portion of the chain corresponds to 19-568; the sequence is APLCLSRQLR…FLAWGQPAVL (550 aa). N128 and N262 each carry an N-linked (GlcNAc...) asparagine glycan. A helical membrane pass occupies residues 569–589; the sequence is VLLILLALALGLVLVALGLFI. Over 590–601 the chain is Cytoplasmic; sequence RHRDSPLVQASG. A helical transmembrane segment spans residues 602-622; the sequence is GPRACFGLACLGLVCLSVLLF. Residues 623-637 are Extracellular-facing; sequence PGQPGPASCLAQQPL. The chain crosses the membrane as a helical span at residues 638-658; sequence LHLPLTGCLSTLFLQAAQIFV. The Cytoplasmic portion of the chain corresponds to 659–680; that stretch reads GSELPSSWADQLRRCLQGPWAW. The helical transmembrane segment at 681-701 threads the bilayer; the sequence is LLVLLALLAEAALCAWYLVAF. At 702–727 the chain is on the extracellular side; the sequence is PPEVVTDWWVLPTQVLVHCRMRSWIS. The chain crosses the membrane as a helical span at residues 728-748; sequence FGLLHAINAMLAFLCFLGTFL. At 749-760 the chain is on the cytoplasmic side; the sequence is VQSRPGRYNGAR. Residues 761–781 form a helical membrane-spanning segment; sequence GLTFAMLAYFITWISFVPLFA. The Extracellular portion of the chain corresponds to 782–789; the sequence is NVHVAYQP. Residues 790–810 traverse the membrane as a helical segment; it reads TVQMAAILLCALGILATFHLP. Topologically, residues 811-845 are cytoplasmic; that stretch reads KCYLLLQQLELNNPEFFLGDDARGQGSSGSGGKET.

Belongs to the G-protein coupled receptor 3 family. TAS1R subfamily. Forms homodimers or heterodimers with TAS1R1 and TAS1R2.

The protein localises to the cell membrane. Functionally, putative taste receptor. TAS1R1/TAS1R3 responds to the umami taste stimulus (the taste of monosodium glutamate). TAS1R2/TAS1R3 recognizes diverse natural and synthetic sweeteners. TAS1R3 is essential for the recognition and response to the disaccharide trehalose. Sequence differences within and between species can significantly influence the selectivity and specificity of taste responses. This chain is Taste receptor type 1 member 3 (TAS1R3), found in Canis lupus familiaris (Dog).